The primary structure comprises 442 residues: tRNA modification GTPase MnmE (442 aa).

Residues Arg27, Glu84, and Lys124 each coordinate (6S)-5-formyl-5,6,7,8-tetrahydrofolate. The TrmE-type G domain occupies 221–366 (GFQIVILGAP…LMELISQASA (146 aa)). Residues 231 to 236 (NAGKSS), 250 to 256 (TEEPGTT), 275 to 278 (DTAG), and 329 to 332 (NKAD) contribute to the GTP site. Residues Ser235 and Thr256 each contribute to the Mg(2+) site. (6S)-5-formyl-5,6,7,8-tetrahydrofolate is bound at residue Lys442.

This sequence belongs to the TRAFAC class TrmE-Era-EngA-EngB-Septin-like GTPase superfamily. TrmE GTPase family. Homodimer. Heterotetramer of two MnmE and two MnmG subunits. K(+) serves as cofactor.

It localises to the cytoplasm. In terms of biological role, exhibits a very high intrinsic GTPase hydrolysis rate. Involved in the addition of a carboxymethylaminomethyl (cmnm) group at the wobble position (U34) of certain tRNAs, forming tRNA-cmnm(5)s(2)U34. The sequence is that of tRNA modification GTPase MnmE from Chelativorans sp. (strain BNC1).